A 133-amino-acid polypeptide reads, in one-letter code: Holo-[acyl-carrier-protein] synthase (133 aa).

Mg(2+) contacts are provided by Asp8 and Glu58.

Belongs to the P-Pant transferase superfamily. AcpS family. It depends on Mg(2+) as a cofactor.

Its subcellular location is the cytoplasm. The enzyme catalyses apo-[ACP] + CoA = holo-[ACP] + adenosine 3',5'-bisphosphate + H(+). In terms of biological role, transfers the 4'-phosphopantetheine moiety from coenzyme A to a Ser of acyl-carrier-protein. This chain is Holo-[acyl-carrier-protein] synthase, found in Erythrobacter litoralis (strain HTCC2594).